Consider the following 328-residue polypeptide: MLPEQSAFGRSAMPGSDAVNPGPSPFAPPPNSFSGDFLGLSLPDEEHLWGMSPLSSSMPSWNGKNEQMFSNPNLERDLKHSHVRNGQPTPPPYGDNKTHTVGDLYSLSQCQFSNGAQNFQTHNDRRSFCEQSAINSNGGSSKRRKVRDAKMTQAEYNEQQQEKAKREKFLERNRLAASKCRQKKKEHTQLLESRYREQSDKKEQLVSEIARLRSEILGLKNEVLKHAQCGDEPIKLHLAQMVKKITYNDTTAPDLTDVPDAASSSEGPMTPRPQQALSFGFDDPLHLEPSRADGSTDHSVRRDSEASVLTENSYAFSTDESFDDLINV.

Residues Met-1–Gly-39 form a disordered region. A compositionally biased stretch (pro residues) spans Gly-22–Asn-31. Positions Lys-163–Lys-202 are basic motif. Positions Lys-163–His-226 constitute a bZIP domain. The interval Leu-205–Leu-219 is leucine-zipper. The disordered stretch occupies residues Thr-250–Ser-313. Polar residues predominate over residues Ala-262–Leu-277. The segment covering Asp-283–Glu-305 has biased composition (basic and acidic residues).

This sequence belongs to the bZIP family. ATF subfamily.

It localises to the nucleus. In terms of biological role, transcription factor that acts as a key player in the regulatory circuit that integrates secondary metabolism and cellular response to oxidative stress. Regulates the genes involved in development, as well as osmotic, oxidative, and cell wall stresses. Participates in the caspofungin paradoxical effect (CPE), where fungi grow beyond the minimum inhibitory concentration of caspofungin. Plays a role in virulence. This is Basic leucine zipper (bZIP) transcription factor atfB from Aspergillus fumigatus (strain ATCC MYA-4609 / CBS 101355 / FGSC A1100 / Af293) (Neosartorya fumigata).